A 2890-amino-acid polypeptide reads, in one-letter code: Bifunctional DNA-directed RNA polymerase subunit beta-beta' (2890 aa).

The interval 1–1377 (MSKKIPLKNR…DINIFGDDVD (1377 aa)) is DNA-directed RNA polymerase subunit beta. A DNA-directed RNA polymerase subunit beta' region spans residues 1384-2890 (PIVIKEDDRP…LRTLEDDPKF (1507 aa)). The Zn(2+) site is built by Cys1449, Cys1451, Cys1465, and Cys1468. Mg(2+) is bound by residues Asp1849, Asp1851, and Asp1853. Cys2179, Cys2253, Cys2260, and Cys2263 together coordinate Zn(2+).

The protein in the N-terminal section; belongs to the RNA polymerase beta chain family. This sequence in the C-terminal section; belongs to the RNA polymerase beta' chain family. In terms of assembly, the RNAP catalytic core consists of 2 alpha, 1 beta/beta' and 1 omega subunit. When a sigma factor is associated with the core the holoenzyme is formed, which can initiate transcription. Mg(2+) serves as cofactor. Requires Zn(2+) as cofactor.

It carries out the reaction RNA(n) + a ribonucleoside 5'-triphosphate = RNA(n+1) + diphosphate. Its function is as follows. DNA-dependent RNA polymerase catalyzes the transcription of DNA into RNA using the four ribonucleoside triphosphates as substrates. The chain is Bifunctional DNA-directed RNA polymerase subunit beta-beta' (rpoBC) from Helicobacter pylori (strain Shi470).